We begin with the raw amino-acid sequence, 671 residues long: Heat shock transcription factor hsf-1 (671 aa).

2 stretches are compositionally biased toward low complexity: residues 1–17 and 38–52; these read MQPT…QQQQ and QQAP…NHQN. Residues 1–61 form a disordered region; that stretch reads MQPTGNQIQQ…NGAIGGKKSS (61 aa). The tract at residues 89–196 is DNA-binding domain; it reads LPVFLIKLWN…LLSQIKRKQS (108 aa). A coiled-coil region spans residues 206–240; it reads NEQTQQNLEVVMAEMRAMREKAKNMEDKMNKLTKE. Disordered regions lie at residues 329 to 423, 437 to 493, 526 to 552, and 612 to 671; these read QEPF…PLTH, YQGA…VNNY, HHPT…GLSP, and NAPE…PNLV. Residues 370 to 386 are compositionally biased toward polar residues; that stretch reads GAQSSRYSDGGATSSRE. Positions 439-456 are enriched in low complexity; sequence GASPASGGPSTSSSAPSG. 2 stretches are compositionally biased toward polar residues: residues 474 to 493 and 528 to 552; these read ATRQ…VNNY and PTTS…GLSP.

This sequence belongs to the HSF family. In terms of assembly, forms homodimers and homotrimers. Component of the DHIC (ddl-1-containing hsf-1 inhibitory complex), which contains at least ddl-1, ddl-2, hsb-1 and hsf-1. Within the complex, interacts with ddl-1. Formation of the DHIC may be dependent upon the Insulin/IGF-1-like signaling (IIS) mediated pathway. In terms of processing, phosphorylated. Post-translationally, sumoylated. Sumoylation may inhibit transcriptional activity in response to heat shock. In terms of tissue distribution, expressed in intestinal cells, body wall muscle cells, and hypodermal cells, as well as many neurons in the head and tail.

Its subcellular location is the nucleus. It localises to the cytoplasm. Functions as a stress-inducible and DNA-binding transcription factor, playing a central role in the transcriptional activation of the heat shock response (HSR), leading to the expression of a large class of molecular chaperones, heat shock proteins (HSPs), that protect cells from cellular insult damage. Upon exposure to heat and other stress stimuli, activates gene transcription through binding to site-specific heat shock elements (HSEs) present in the promoter regions of target genes, such as the HSPs. Binds to inverted 5'-NGAAN-3' pentamer DNA sequences in HSEs. Involved in positive modulation of expression of heat shock protein hsp-16.2 in response to heat shock; may act in concert with homeodomain-interacting protein kinase hpk-1. In response to heat shock or starvation, required for the modulation of lifespan, and protection against aberrant protein aggregation proteotoxicity; may act in parallel with the Insulin/IGF-1-like signaling (IIS) mediated pathway. Plays a role in modulating autophagy, in response to a moderate and short-term heat shock, also known as a hormetic heat shock. Involved in positive modulation of ascaroside pheromone biosynthesis in response to heat shock, perhaps by directly activating transcription of peroxisomal fatty acid beta-oxidation genes. Required in modulating the response to infection by either Gram-negative or Gram-positive bacteria, perhaps acting via regulation of expression of Hsp90/daf-21 and members of the small heat shock protein (HSP20) family. May play a role downstream of the daf-16/FOXO and daf-2 signaling pathway in response to bacterial pathogens. Modulates expression of multiple microRNA genes, in both heat shock-dependent and -independent manner. Independent of heat shock, required to modulate expression of genes involved in larval development, mainly distinct from HSPs; acts in concert with putative transcription factor efl-1/E2F, which may form part of a multiprotein DRM complex. Independent of heat shock, involved in promoting death of the linker cell, a male-specific cell which guides the elongation of the gonad; perhaps acting by modulating expression of ubiquitin-conjugating enzyme let-70. Plays a role in egg-laying. The polypeptide is Heat shock transcription factor hsf-1 (Caenorhabditis elegans).